The following is a 1512-amino-acid chain: ATP-dependent permease YOR1 (1512 aa).

The disordered stretch occupies residues 1–68 (MSPLLPTHWG…KGMKETEDGG (68 aa)). Positions 13–29 (APQNEPTLPSPSHSVST) are enriched in polar residues. The span at 31-65 (VGDEEKLRRSEGSDGEDRINLDSNKYDVKGMKETE) shows a compositional bias: basic and acidic residues. 5 consecutive transmembrane segments (helical) span residues 229–249 (ASLA…AGFI), 288–308 (GPGI…SLGM), 363–385 (FAAG…IIIL), 475–495 (GMTA…FITY), and 507–527 (IFTV…WPMT). Residues 246 to 533 (AGFIKVFGDT…WPMTLSSTAD (288 aa)) form the ABC transmembrane type-1 1 domain. The disordered stretch occupies residues 594–656 (VLNGGKPGGP…SAPGIDEEIS (63 aa)). Residues 619–643 (AEEIQAETAAGQPGAGEASAEGQGQ) are compositionally biased toward low complexity. One can recognise an ABC transporter 1 domain in the interval 651–871 (IDEEISEKKE…NGAFAKLIKE (221 aa)). 683-690 (GAIGSGKS) contributes to the ATP binding site. A run of 4 helical transmembrane segments spans residues 937 to 957 (GVFM…FYVI), 974 to 994 (NGFY…ALFF), 1067 to 1087 (VILL…VSLL), and 1167 to 1187 (FLGS…SSVS). Residues 943 to 1217 (LLFFCIVVAQ…LVRQIAEVEN (275 aa)) enclose the ABC transmembrane type-1 2 domain. The ABC transporter 2 domain maps to 1255–1496 (IEFKDVRMRY…GGIFTEMCSK (242 aa)). 1289–1296 (GRTGAGKS) lines the ATP pocket.

It belongs to the ABC transporter superfamily. ABCC family. Conjugate transporter (TC 3.A.1.208) subfamily.

The protein resides in the extracellular vesicle membrane. It is found in the secreted. Its function is as follows. Transmembrane transporter. May play a role in the packaging or formation of extracellular vesicles (EVs), and in the export of virulence factors from EVs. Required for efficient non-lytic exocytosis from host macrophages, the process by which the yeast escapes host macrophages with both host cell and pathogen remaining viable. The protein is ATP-dependent permease YOR1 of Cryptococcus neoformans var. grubii serotype A (strain H99 / ATCC 208821 / CBS 10515 / FGSC 9487) (Filobasidiella neoformans var. grubii).